The primary structure comprises 494 residues: Probable cobyric acid synthase (494 aa).

The GATase cobBQ-type domain occupies S249–F447. C331 (nucleophile) is an active-site residue. H439 is a catalytic residue.

This sequence belongs to the CobB/CobQ family. CobQ subfamily.

The protein operates within cofactor biosynthesis; adenosylcobalamin biosynthesis. In terms of biological role, catalyzes amidations at positions B, D, E, and G on adenosylcobyrinic A,C-diamide. NH(2) groups are provided by glutamine, and one molecule of ATP is hydrogenolyzed for each amidation. This chain is Probable cobyric acid synthase, found in Methanopyrus kandleri (strain AV19 / DSM 6324 / JCM 9639 / NBRC 100938).